A 695-amino-acid polypeptide reads, in one-letter code: Follicle-stimulating hormone receptor (695 aa).

The first 17 residues, 1–17, serve as a signal peptide directing secretion; it reads MALFLVALLAFLSLGSG. 2 cysteine pairs are disulfide-bonded: Cys18/Cys25 and Cys23/Cys32. The LRRNT domain occupies 18–46; sequence CHHRLCHCSNGVFLCQDSKVTEMPSDLPR. Residues 18-366 are Extracellular-facing; sequence CHHRLCHCSN…EDIMGYDILR (349 aa). LRR repeat units follow at residues 48–70, 71–93, 96–118, 121–142, 143–167, 171–192, 194–216, 219–239, and 240–262; these read AVELRFVLTKLRVIPEGAFSGFG, DLEKIEISQNDVLEVIEANVFSN, KLHEIRIEKANNLLYIDPDAFQN, NLRYLLISNTGIKHLPAVHKIQ, SLQKVLLDIQDNINIHTVERNSFMG, ESMIVWLSKNGIQEIHNCAFNG, QLDELNLSDNSNLEELPNDVFQG, GPVILDISRTRIRSLPSYGLE, and NLKKLRAKSTYHLKKLPSLEKFV. Residues Asn191 and Asn199 are each glycosylated (N-linked (GlcNAc...) asparagine). 4 disulfide bridges follow: Cys275-Cys346, Cys276-Cys292, Cys276-Cys356, and Cys292-Cys338. The N-linked (GlcNAc...) asparagine glycan is linked to Asn293. Sulfotyrosine is present on Tyr335. Residues 367-387 traverse the membrane as a helical segment; that stretch reads VLIWFISILAITGNILVLVIL. At 388–398 the chain is on the cytoplasmic side; it reads ITSQYKLTVPR. Residues 399 to 421 traverse the membrane as a helical segment; sequence FLMCNLAFADLCIGIYLLLIASV. The Extracellular segment spans residues 422-443; sequence DVHTKSQYHNYAIDWQTGAGCD. A disulfide bridge links Cys442 with Cys517. The chain crosses the membrane as a helical span at residues 444 to 465; it reads AAGFFTVFASELSVYTLTAITL. The Cytoplasmic portion of the chain corresponds to 466 to 485; it reads ERWHTITHAMQLECKVHVRH. The chain crosses the membrane as a helical span at residues 486-508; it reads AASIMLVGWVFAFAVALFPIFGI. At 509-528 the chain is on the extracellular side; sequence SSYMKVSICLPMDIDSPLSQ. A helical transmembrane segment spans residues 529–550; the sequence is LYVMSLLVLNVLAFVVICGCYT. The Cytoplasmic portion of the chain corresponds to 551-573; sequence HIYLTVRNPNITSSSSDTKIAKR. A helical transmembrane segment spans residues 574 to 597; that stretch reads MAMLIFTDFLCMAPISFFAISASL. At 598 to 608 the chain is on the extracellular side; the sequence is KVPLITVSKSK. The helical transmembrane segment at 609 to 630 threads the bilayer; the sequence is ILLVLFYPINSCANPFLYAIFT. Over 631–695 the chain is Cytoplasmic; the sequence is RNFRRDFFIL…LIPLRHLAKN (65 aa).

Belongs to the G-protein coupled receptor 1 family. FSH/LSH/TSH subfamily. In terms of assembly, homotrimer. Functions as a homotrimer binding the FSH hormone heterodimer composed of CGA and FSHB. Interacts with ARRB2. Interacts with APPL2; interaction is independent of follicle stimulating hormone stimulation. In terms of processing, N-glycosylated; indirectly required for FSH-binding, possibly via a conformational change that allows high affinity binding of hormone. Sulfated. Isoform FSH-R3 is expressed in ovary and testis, but not in kidney (at protein level).

The protein localises to the cell membrane. G protein-coupled receptor for follitropin, the follicle-stimulating hormone. The activity of isoform FSH-R1 is mediated by G proteins which activate adenylate cyclase. Isoform FSH-R2 and isoform FSH-R3 also bind FSH, but this does not result in activation of adenylate cyclase. Isoform FSH-R3 may be involved in calcium signaling. Through cAMP production activates the downstream PI3K-AKT and ERK1/ERK2 signaling pathways. This is Follicle-stimulating hormone receptor (FSHR) from Ovis aries (Sheep).